The following is a 255-amino-acid chain: Type III pantothenate kinase (255 aa).

Residue 6–13 participates in ATP binding; the sequence is DVGNTNIV. Residues Tyr-100 and 107-110 each bind substrate; that span reads GADR. Asp-109 functions as the Proton acceptor in the catalytic mechanism. Position 129 (Asp-129) interacts with K(+). Residue Thr-132 participates in ATP binding. Position 184 (Thr-184) interacts with substrate.

It belongs to the type III pantothenate kinase family. As to quaternary structure, homodimer. The cofactor is NH4(+). K(+) serves as cofactor.

It localises to the cytoplasm. The catalysed reaction is (R)-pantothenate + ATP = (R)-4'-phosphopantothenate + ADP + H(+). Its pathway is cofactor biosynthesis; coenzyme A biosynthesis; CoA from (R)-pantothenate: step 1/5. Functionally, catalyzes the phosphorylation of pantothenate (Pan), the first step in CoA biosynthesis. This is Type III pantothenate kinase from Thermoanaerobacter sp. (strain X514).